The following is a 517-amino-acid chain: Ubiquitin carboxyl-terminal hydrolase 30 (517 aa).

Residues 1-35 (MLSSRAQAARTAADKALQRFLRTGAAVRYKVMKNW) lie on the Mitochondrial intermembrane side of the membrane. A helical membrane pass occupies residues 36 to 56 (GVIGGIAAALAAGIYVIWGPI). The Cytoplasmic portion of the chain corresponds to 57–517 (TERKKRRKGL…QQGREYRSEE (461 aa)). Residues 68–502 (PGLVNLGNTC…SAYLLFYERV (435 aa)) form the USP domain. The active-site Nucleophile is Cys-77. Residues 198 to 221 (MAPRQVTCHTRGSPHPTTNHWKSQ) are disordered. A compositionally biased stretch (polar residues) spans 204-218 (TCHTRGSPHPTTNHW). Residues Lys-235 and Lys-289 each participate in a glycyl lysine isopeptide (Lys-Gly) (interchain with G-Cter in ubiquitin) cross-link. The disordered stretch occupies residues 364 to 395 (SQHGPKATENPGSAPEVQDAQAAPKPGLSQPG). The active-site Proton acceptor is His-452.

It belongs to the peptidase C19 family. Post-translationally, ubiquitinated by parkin (PRKN) at Lys-235 and Lys-289, leading to its degradation.

Its subcellular location is the mitochondrion outer membrane. It carries out the reaction Thiol-dependent hydrolysis of ester, thioester, amide, peptide and isopeptide bonds formed by the C-terminal Gly of ubiquitin (a 76-residue protein attached to proteins as an intracellular targeting signal).. Inhibited by the diterpenoid derivative 15-oxospiramilactone (S3). Deubiquitinating enzyme tethered to the mitochondrial outer membrane that acts as a key inhibitor of mitophagy by counteracting the action of parkin (PRKN): hydrolyzes ubiquitin attached by parkin on target proteins, such as RHOT1/MIRO1 and TOMM20, thereby blocking parkin's ability to drive mitophagy. Preferentially cleaves 'Lys-6'- and 'Lys-11'-linked polyubiquitin chains, 2 types of linkage that participate in mitophagic signaling. Does not cleave efficiently polyubiquitin phosphorylated at 'Ser-65'. Acts as negative regulator of mitochondrial fusion by mediating deubiquitination of MFN1 and MFN2. The protein is Ubiquitin carboxyl-terminal hydrolase 30 (Usp30) of Mus musculus (Mouse).